The sequence spans 230 residues: Uracil-DNA glycosylase (230 aa).

Asp71 acts as the Proton acceptor in catalysis.

This sequence belongs to the uracil-DNA glycosylase (UDG) superfamily. UNG family.

The protein localises to the cytoplasm. The enzyme catalyses Hydrolyzes single-stranded DNA or mismatched double-stranded DNA and polynucleotides, releasing free uracil.. Functionally, excises uracil residues from the DNA which can arise as a result of misincorporation of dUMP residues by DNA polymerase or due to deamination of cytosine. This Nocardioides sp. (strain ATCC BAA-499 / JS614) protein is Uracil-DNA glycosylase.